A 298-amino-acid chain; its full sequence is Transcription factor SRM1 (298 aa).

In terms of domain architecture, SANT spans 7-62; that stretch reads SDGSVWSREDDIAFERALANNTDESEERWEKIAADVPGKSVEQIKEHYELLVEDVT. The interval 68–118 is disordered; it reads CVPLPAYGSPEGSNGHAGDEGASSKKGGNSHAGESNQAGKSKSDQERRKGI. Residues 108–118 show a composition bias toward basic and acidic residues; it reads SKSDQERRKGI. The region spanning 111-168 is the HTH myb-type domain; the sequence is DQERRKGIAWTEDEHRLFLLGLDKYGKGDWRSISRNFVVTRTPTQVASHAQKYFIRLN. The H-T-H motif DNA-binding region spans 140 to 164; the sequence is WRSISRNFVVTRTPTQVASHAQKYF. The span at 182–200 shows a compositional bias: polar residues; the sequence is ITSVGNADVSTPQGPITGQ. The tract at residues 182-245 is disordered; the sequence is ITSVGNADVS…GPPMYGTPAI (64 aa). Low complexity predominate over residues 201 to 215; the sequence is NNSNNNNNNNNNNSS.

In terms of tissue distribution, expressed in young seedlings, developing leaves, sepals and trichomes.

The protein resides in the nucleus. Transcription activator that coordinates abscisic acid (ABA) biosynthesis and signaling-related genes via binding to the specific promoter motif 5'-(A/T)AACCAT-3'. Represses ABA-mediated salt (e.g. NaCl and KCl) stress tolerance. Regulates leaf shape and promotes vegetative growth. This chain is Transcription factor SRM1, found in Arabidopsis thaliana (Mouse-ear cress).